The sequence spans 418 residues: Glutamyl-tRNA reductase (418 aa).

Substrate is bound by residues 49–52 (TCNR), S109, 114–116 (EPQ), and Q120. C50 functions as the Nucleophile in the catalytic mechanism. Residue 189–194 (GAGETI) participates in NADP(+) binding.

This sequence belongs to the glutamyl-tRNA reductase family. Homodimer.

The enzyme catalyses (S)-4-amino-5-oxopentanoate + tRNA(Glu) + NADP(+) = L-glutamyl-tRNA(Glu) + NADPH + H(+). Its pathway is porphyrin-containing compound metabolism; protoporphyrin-IX biosynthesis; 5-aminolevulinate from L-glutamyl-tRNA(Glu): step 1/2. Functionally, catalyzes the NADPH-dependent reduction of glutamyl-tRNA(Glu) to glutamate 1-semialdehyde (GSA). In Klebsiella pneumoniae (strain 342), this protein is Glutamyl-tRNA reductase.